The primary structure comprises 253 residues: Imidazole glycerol phosphate synthase subunit HisF (253 aa).

Active-site residues include aspartate 11 and aspartate 130.

The protein belongs to the HisA/HisF family. In terms of assembly, heterodimer of HisH and HisF.

It is found in the cytoplasm. It carries out the reaction 5-[(5-phospho-1-deoxy-D-ribulos-1-ylimino)methylamino]-1-(5-phospho-beta-D-ribosyl)imidazole-4-carboxamide + L-glutamine = D-erythro-1-(imidazol-4-yl)glycerol 3-phosphate + 5-amino-1-(5-phospho-beta-D-ribosyl)imidazole-4-carboxamide + L-glutamate + H(+). It participates in amino-acid biosynthesis; L-histidine biosynthesis; L-histidine from 5-phospho-alpha-D-ribose 1-diphosphate: step 5/9. In terms of biological role, IGPS catalyzes the conversion of PRFAR and glutamine to IGP, AICAR and glutamate. The HisF subunit catalyzes the cyclization activity that produces IGP and AICAR from PRFAR using the ammonia provided by the HisH subunit. This Geobacter sulfurreducens (strain ATCC 51573 / DSM 12127 / PCA) protein is Imidazole glycerol phosphate synthase subunit HisF.